Consider the following 205-residue polypeptide: N-(5'-phosphoribosyl)anthranilate isomerase (205 aa).

Belongs to the TrpF family.

It catalyses the reaction N-(5-phospho-beta-D-ribosyl)anthranilate = 1-(2-carboxyphenylamino)-1-deoxy-D-ribulose 5-phosphate. It participates in amino-acid biosynthesis; L-tryptophan biosynthesis; L-tryptophan from chorismate: step 3/5. This Zygosaccharomyces bailii protein is N-(5'-phosphoribosyl)anthranilate isomerase (TRP1).